Here is a 559-residue protein sequence, read N- to C-terminus: Formate--tetrahydrofolate ligase (559 aa).

68–75 provides a ligand contact to ATP; that stretch reads TPAGEGKT.

This sequence belongs to the formate--tetrahydrofolate ligase family. Homotetramer.

The catalysed reaction is (6S)-5,6,7,8-tetrahydrofolate + formate + ATP = (6R)-10-formyltetrahydrofolate + ADP + phosphate. It functions in the pathway one-carbon metabolism; tetrahydrofolate interconversion. This Moorella thermoacetica (Clostridium thermoaceticum) protein is Formate--tetrahydrofolate ligase.